The sequence spans 174 residues: Keratin-associated protein 9-2 (174 aa).

Tandem repeats lie at residues Cys-8 to Thr-12, Cys-13 to Thr-17, Cys-18 to Thr-22, Cys-37 to Ala-41, Cys-42 to Ser-46, Cys-51 to Thr-55, Cys-61 to Thr-65, Cys-66 to Thr-70, Cys-75 to Ser-79, Cys-80 to Pro-84, Cys-85 to Thr-89, Cys-90 to Ser-94, Cys-95 to Thr-99, Cys-144 to Ala-148, Cys-149 to Thr-153, Cys-154 to Thr-158, and Cys-168 to Ser-172. The 17 X 5 AA repeats of C-C-[RQVSGE]-[SPTQ]-[TASP] stretch occupies residues Cys-8–Ser-172.

Belongs to the KRTAP type 9 family. As to quaternary structure, interacts with hair keratins.

Its function is as follows. In the hair cortex, hair keratin intermediate filaments are embedded in an interfilamentous matrix, consisting of hair keratin-associated proteins (KRTAP), which are essential for the formation of a rigid and resistant hair shaft through their extensive disulfide bond cross-linking with abundant cysteine residues of hair keratins. The matrix proteins include the high-sulfur and high-glycine-tyrosine keratins. The sequence is that of Keratin-associated protein 9-2 (KRTAP9-2) from Homo sapiens (Human).